The chain runs to 372 residues: Glutamate 5-kinase (372 aa).

Lys-14 contacts ATP. Substrate contacts are provided by Ser-54, Asp-141, and Asn-153. Residue 173 to 174 (TD) coordinates ATP. A PUA domain is found at 280–358 (RGTLVLDAGA…DAIESILGYS (79 aa)).

Belongs to the glutamate 5-kinase family.

It localises to the cytoplasm. It catalyses the reaction L-glutamate + ATP = L-glutamyl 5-phosphate + ADP. It functions in the pathway amino-acid biosynthesis; L-proline biosynthesis; L-glutamate 5-semialdehyde from L-glutamate: step 1/2. Functionally, catalyzes the transfer of a phosphate group to glutamate to form L-glutamate 5-phosphate. The polypeptide is Glutamate 5-kinase (Pseudomonas putida (strain GB-1)).